The following is a 397-amino-acid chain: MSEHNYQSDREVAEDPFLNYEASANQLSSNSRESTPRGSPWRAGMRSASLMTEPLEDSMYSDNNYLDNGVSFTKDENPLYSPSWPSLADANVNSMKSNNAIQEHKAAKFVSEKSLEKVSTADNNLVLQELENLRERLNQVELQLSERPSSYLGYHNNLSPYRSPNSYPSLLPSTHSPHSPAPLSTMQTALMRLRTYHPSPIILKPVEQAVNHAITLVNTSPSSVVDALCRSLAELCLGLVQEAIDASILSQQESSNSLDLVRHTPPLNYTSSVDSSPQRMASDSYGRPSLHLNDPFPSVDLQSNELSHHNVRTTLFSDDSRFHSKIHTHSTPPSQMYSAASHFRYRSDPSTRHVSNSTNKSSLHPSPTSLRVAHPIIPQRASPASQSFPSLQDTPSP.

A compositionally biased stretch (basic and acidic residues) spans 1 to 13; it reads MSEHNYQSDREVA. Disordered stretches follow at residues 1 to 44, 269 to 298, and 346 to 397; these read MSEH…WRAG, YTSS…PFPS, and RSDP…TPSP. Composition is skewed to polar residues over residues 22–37, 269–281, 352–369, and 382–397; these read ASAN…STPR, YTSS…QRMA, RHVS…SPTS, and SPAS…TPSP. Phosphoserine is present on residues serine 366 and serine 396.

In terms of assembly, interacts with mto1; the interaction is direct and required for efficient binding to the gamma-tubulin complex. Interacts with gamma tubulin complex subunits alp4, alp6 and gtb1.

It is found in the cytoplasm. The protein resides in the cytoskeleton. The protein localises to the microtubule organizing center. It localises to the spindle pole body. Its function is as follows. Acts together with mto1 to promote nucleation of at least a subset of cytoplasmic microtubules, by recruiting the gamma-tubulin complex to the interphase microtubule organizing center (iMTOC) and to the equatorial MTOC (eMTOC) during anaphase. Does not appear to be required for cytoplasmic astral microtubule nucleation from the spindle pole body (SPB). Required to establish the eMTOC, and thereby to tether the cytokinetic actin ring. The sequence is that of Gamma tubulin complex adapter mto2 from Schizosaccharomyces pombe (strain 972 / ATCC 24843) (Fission yeast).